Here is a 552-residue protein sequence, read N- to C-terminus: Glycosyltransferase family 92 protein RCOM_0530710 (552 aa).

Residues 12–34 (WNRFFWCTLLLVLSCVLFTASTF) form a helical; Signal-anchor membrane-spanning segment. A GT92 domain is found at 277 to 520 (KPHEMCICTM…GTRAVEPPDW (244 aa)).

The protein belongs to the glycosyltransferase 92 family.

Its subcellular location is the membrane. This Ricinus communis (Castor bean) protein is Glycosyltransferase family 92 protein RCOM_0530710.